The chain runs to 301 residues: Hydrogen peroxide-inducible genes activator (301 aa).

Residues 1 to 58 (MNIRDLEYLVALSEYKHFRRAADSCNVSQPTLSGQIRKLEDELGIILLERTSRKVLFT) enclose the HTH lysR-type domain. A DNA-binding region (H-T-H motif) is located at residues 18–37 (FRRAADSCNVSQPTLSGQIR).

This sequence belongs to the LysR transcriptional regulatory family.

In terms of biological role, required for the induction of a regulon of hydrogen peroxide inducible genes such as catalase and glutathione-reductase. This Haemophilus influenzae (strain ATCC 51907 / DSM 11121 / KW20 / Rd) protein is Hydrogen peroxide-inducible genes activator (oxyR).